A 427-amino-acid polypeptide reads, in one-letter code: Glutamate-1-semialdehyde 2,1-aminomutase (427 aa).

N6-(pyridoxal phosphate)lysine is present on lysine 265.

Belongs to the class-III pyridoxal-phosphate-dependent aminotransferase family. HemL subfamily. As to quaternary structure, homodimer. Pyridoxal 5'-phosphate serves as cofactor.

The protein localises to the cytoplasm. The catalysed reaction is (S)-4-amino-5-oxopentanoate = 5-aminolevulinate. It functions in the pathway porphyrin-containing compound metabolism; protoporphyrin-IX biosynthesis; 5-aminolevulinate from L-glutamyl-tRNA(Glu): step 2/2. The chain is Glutamate-1-semialdehyde 2,1-aminomutase from Pseudomonas putida (strain ATCC 700007 / DSM 6899 / JCM 31910 / BCRC 17059 / LMG 24140 / F1).